We begin with the raw amino-acid sequence, 139 residues long: Actin-depolymerizing factor 1 (139 aa).

In terms of domain architecture, ADF-H spans 5–139 (ASGMAVHDDC…DLDVFRSRAN (135 aa)). Phosphoserine; by CPK3 is present on serine 6.

This sequence belongs to the actin-binding proteins ADF family. In terms of assembly, interacts with the 14-3-3-like protein GRF6/AFT1. In terms of processing, phosphorylation at Ser-6 by CPK3/CDPK6 inhibits actin-depolimerizing activity. Expressed in vascular tissues of all organs.

The protein resides in the cytoplasm. Its subcellular location is the cytoskeleton. Functionally, actin-depolymerizing protein. Stimulates F-actin depolymerization. Involved in plant development, cell organ expansion and flowering by controlling breakdown of thick actin cables. Severs actin filaments or bundles and promotes actin cytoskeleton disassembly. Binds monomeric actin (G-actin) with a marked preference for the ADP-loaded form and inhibits the rate of nucleotide exchange on G-actin. In Arabidopsis thaliana (Mouse-ear cress), this protein is Actin-depolymerizing factor 1 (ADF1).